Consider the following 246-residue polypeptide: 3-deoxy-manno-octulosonate cytidylyltransferase (246 aa).

Belongs to the KdsB family.

The protein resides in the cytoplasm. The enzyme catalyses 3-deoxy-alpha-D-manno-oct-2-ulosonate + CTP = CMP-3-deoxy-beta-D-manno-octulosonate + diphosphate. It functions in the pathway nucleotide-sugar biosynthesis; CMP-3-deoxy-D-manno-octulosonate biosynthesis; CMP-3-deoxy-D-manno-octulosonate from 3-deoxy-D-manno-octulosonate and CTP: step 1/1. The protein operates within bacterial outer membrane biogenesis; lipopolysaccharide biosynthesis. Activates KDO (a required 8-carbon sugar) for incorporation into bacterial lipopolysaccharide in Gram-negative bacteria. In Leptospira biflexa serovar Patoc (strain Patoc 1 / Ames), this protein is 3-deoxy-manno-octulosonate cytidylyltransferase.